The following is a 358-amino-acid chain: Photosystem II protein D1 2 (358 aa).

The next 3 membrane-spanning stretches (helical) occupy residues 28–45, 117–132, and 141–155; these read YVGW…AATI, HFLI…QWEL, and WICV…AAMA. His117 contributes to the chlorophyll a binding site. Pheophytin a is bound at residue Tyr125. 2 residues coordinate [CaMn4O5] cluster: Asp169 and Glu188. A helical membrane pass occupies residues 196–217; sequence FHMLGVAGVFGGSLFSAMHGSL. Chlorophyll a is bound at residue His197. Residues His214 and 263 to 264 each bind a quinone; that span reads SF. A Fe cation-binding site is contributed by His214. Fe cation is bound at residue His271. Residues 273-287 traverse the membrane as a helical segment; that stretch reads FLGAWPVVGIWFTSM. 4 residues coordinate [CaMn4O5] cluster: His331, Glu332, Asp341, and Ala343. Positions 344–358 are excised as a propeptide; sequence TVESTPVALQAPAIG.

The protein belongs to the reaction center PufL/M/PsbA/D family. As to quaternary structure, PSII is composed of 1 copy each of membrane proteins PsbA, PsbB, PsbC, PsbD, PsbE, PsbF, PsbH, PsbI, PsbJ, PsbK, PsbL, PsbM, PsbT, PsbX, PsbY, PsbZ, Psb30/Ycf12, peripheral proteins PsbO, CyanoQ (PsbQ), PsbU, PsbV and a large number of cofactors. It forms dimeric complexes. The D1/D2 heterodimer binds P680, chlorophylls that are the primary electron donor of PSII, and subsequent electron acceptors. It shares a non-heme iron and each subunit binds pheophytin, quinone, additional chlorophylls, carotenoids and lipids. D1 provides most of the ligands for the Mn4-Ca-O5 cluster of the oxygen-evolving complex (OEC). There is also a Cl(-1) ion associated with D1 and D2, which is required for oxygen evolution. The PSII complex binds additional chlorophylls, carotenoids and specific lipids. serves as cofactor. Post-translationally, tyr-160 forms a radical intermediate that is referred to as redox-active TyrZ, YZ or Y-Z. C-terminally processed by CtpA; processing is essential to allow assembly of the oxygen-evolving complex and thus photosynthetic growth.

It is found in the cellular thylakoid membrane. It carries out the reaction 2 a plastoquinone + 4 hnu + 2 H2O = 2 a plastoquinol + O2. Functionally, photosystem II (PSII) is a light-driven water:plastoquinone oxidoreductase that uses light energy to abstract electrons from H(2)O, generating O(2) and a proton gradient subsequently used for ATP formation. It consists of a core antenna complex that captures photons, and an electron transfer chain that converts photonic excitation into a charge separation. The D1/D2 (PsbA/PsbD) reaction center heterodimer binds P680, the primary electron donor of PSII as well as several subsequent electron acceptors. This Parasynechococcus marenigrum (strain WH8102) protein is Photosystem II protein D1 2.